A 126-amino-acid chain; its full sequence is Small ribosomal subunit protein uS13 (126 aa).

The interval 95–126 (GLPVRGQRTQTNARTRKGKKKTVAGKKKAGRK) is disordered. Basic residues predominate over residues 108 to 126 (RTRKGKKKTVAGKKKAGRK).

This sequence belongs to the universal ribosomal protein uS13 family. In terms of assembly, part of the 30S ribosomal subunit. Forms a loose heterodimer with protein S19. Forms two bridges to the 50S subunit in the 70S ribosome.

In terms of biological role, located at the top of the head of the 30S subunit, it contacts several helices of the 16S rRNA. In the 70S ribosome it contacts the 23S rRNA (bridge B1a) and protein L5 of the 50S subunit (bridge B1b), connecting the 2 subunits; these bridges are implicated in subunit movement. Contacts the tRNAs in the A and P-sites. In Thermobifida fusca (strain YX), this protein is Small ribosomal subunit protein uS13.